The primary structure comprises 366 residues: Histidinol-phosphate aminotransferase 2 (366 aa).

The span at 1–11 shows a compositional bias: polar residues; that stretch reads MQVKDQLSSLQ. Residues 1–21 are disordered; it reads MQVKDQLSSLQPYKPGKSPEQ. N6-(pyridoxal phosphate)lysine is present on K222.

Belongs to the class-II pyridoxal-phosphate-dependent aminotransferase family. Histidinol-phosphate aminotransferase subfamily. In terms of assembly, homodimer. It depends on pyridoxal 5'-phosphate as a cofactor.

The enzyme catalyses L-histidinol phosphate + 2-oxoglutarate = 3-(imidazol-4-yl)-2-oxopropyl phosphate + L-glutamate. It participates in amino-acid biosynthesis; L-histidine biosynthesis; L-histidine from 5-phospho-alpha-D-ribose 1-diphosphate: step 7/9. This Bacillus cereus (strain ATCC 14579 / DSM 31 / CCUG 7414 / JCM 2152 / NBRC 15305 / NCIMB 9373 / NCTC 2599 / NRRL B-3711) protein is Histidinol-phosphate aminotransferase 2 (hisC2).